The following is a 185-amino-acid chain: Photosystem I assembly protein Ycf4 (185 aa).

The next 2 membrane-spanning stretches (helical) occupy residues 21–43 and 63–85; these read NFFWACILFLGSLGFLAVGASSY and GVVMSFYGIAGLFISSYLWCTIL.

Belongs to the Ycf4 family.

It is found in the plastid. It localises to the chloroplast thylakoid membrane. Functionally, seems to be required for the assembly of the photosystem I complex. The polypeptide is Photosystem I assembly protein Ycf4 (Saccharum hybrid (Sugarcane)).